The following is a 67-amino-acid chain: DNA-directed RNA polymerase subunit omega (67 aa).

The protein belongs to the RNA polymerase subunit omega family. As to quaternary structure, RNAP is composed of a core of 2 alpha, a beta and a beta' subunit. The core is associated with a delta subunit, and at least one of epsilon or omega. When a sigma factor is associated with the core the holoenzyme is formed, which can initiate transcription.

The catalysed reaction is RNA(n) + a ribonucleoside 5'-triphosphate = RNA(n+1) + diphosphate. Functionally, promotes RNA polymerase assembly. Latches the N- and C-terminal regions of the beta' subunit thereby facilitating its interaction with the beta and alpha subunits. In vitro reconstitution experiments this subunit is dispensible. This Bacillus subtilis (strain 168) protein is DNA-directed RNA polymerase subunit omega (rpoZ).